A 273-amino-acid chain; its full sequence is Salivary glue protein Sgs-3 (273 aa).

The first 23 residues, 1 to 23 (MKLTIAISLASILLLSVAHVAQG), serve as a signal peptide directing secretion. Residues 47–57 (TTTTTTTTCAP) are compositionally biased toward low complexity. The tract at residues 47 to 225 (TTTTTTTTCA…TPKPTNKPGC (179 aa)) is disordered. Positions 58-67 (PTRPPPPPCT) are enriched in pro residues. The segment covering 83–225 (RRTTTTTRQT…TPKPTNKPGC (143 aa)) has biased composition (low complexity).

The protein is Salivary glue protein Sgs-3 (Sgs3) of Drosophila yakuba (Fruit fly).